Here is a 289-residue protein sequence, read N- to C-terminus: ATP synthase gamma chain (289 aa).

Belongs to the ATPase gamma chain family. F-type ATPases have 2 components, CF(1) - the catalytic core - and CF(0) - the membrane proton channel. CF(1) has five subunits: alpha(3), beta(3), gamma(1), delta(1), epsilon(1). CF(0) has three main subunits: a, b and c.

It is found in the cell inner membrane. Produces ATP from ADP in the presence of a proton gradient across the membrane. The gamma chain is believed to be important in regulating ATPase activity and the flow of protons through the CF(0) complex. This chain is ATP synthase gamma chain, found in Polynucleobacter asymbioticus (strain DSM 18221 / CIP 109841 / QLW-P1DMWA-1) (Polynucleobacter necessarius subsp. asymbioticus).